The sequence spans 363 residues: Pyrimidine monooxygenase RutA (363 aa).

FMN is bound by residues 49 to 50, asparagine 115, glutamate 124, 140 to 141, and serine 190; these read IK and RY.

The protein belongs to the NtaA/SnaA/DszA monooxygenase family. RutA subfamily.

It carries out the reaction uracil + FMNH2 + NADH + O2 = (Z)-3-ureidoacrylate + FMN + NAD(+) + H2O + H(+). It catalyses the reaction thymine + FMNH2 + NADH + O2 = (Z)-2-methylureidoacrylate + FMN + NAD(+) + H2O + H(+). Catalyzes the pyrimidine ring opening between N-3 and C-4 by an unusual flavin hydroperoxide-catalyzed mechanism, adding oxygen atoms in the process to yield ureidoacrylate peracid, that immediately reacts with FMN forming ureidoacrylate and FMN-N(5)-oxide. The FMN-N(5)-oxide reacts spontaneously with NADH to produce FMN. Requires the flavin reductase RutF to regenerate FMN in vivo. In Escherichia coli O6:K15:H31 (strain 536 / UPEC), this protein is Pyrimidine monooxygenase RutA.